The following is a 367-amino-acid chain: Splicing factor U2AF-associated protein 2 (367 aa).

Residues 36-104 form a disordered region; sequence YDPNSLKMNK…SKSENSEASP (69 aa). The span at 61–78 shows a compositional bias: basic and acidic residues; that stretch reads TEGKESSNGEDRHTKRLY. 2 RRM domains span residues 112 to 193 and 268 to 329; these read VYIQ…KMRV and LLID…VVEA.

This sequence belongs to the HTATSF1 family. In terms of assembly, interacts with the U2AF large and U2AF small subunits.

In terms of biological role, has a role in pre-mRNA splicing. The chain is Splicing factor U2AF-associated protein 2 (uap2) from Schizosaccharomyces pombe (strain 972 / ATCC 24843) (Fission yeast).